We begin with the raw amino-acid sequence, 402 residues long: Putative polyketide beta-ketoacyl synthase 2 (402 aa).

Disordered stretches follow at residues 1 to 30 (MTPV…WAPR) and 188 to 222 (VEPR…FDRD). Residues 1–400 (MTPVAVTGMG…GFNSALVVRA (400 aa)) enclose the Ketosynthase family 3 (KS3) domain. Residues 192–205 (SAPGAGSPSSPAGG) are compositionally biased toward low complexity.

The protein belongs to the thiolase-like superfamily. Beta-ketoacyl-ACP synthases family.

Its pathway is antifungal biosynthesis; monensin biosynthesis. The sequence is that of Putative polyketide beta-ketoacyl synthase 2 from Streptomyces virginiae (Streptomyces cinnamonensis).